A 189-amino-acid chain; its full sequence is UPF0398 protein BH1768 (189 aa).

The protein belongs to the UPF0398 family.

This chain is UPF0398 protein BH1768, found in Halalkalibacterium halodurans (strain ATCC BAA-125 / DSM 18197 / FERM 7344 / JCM 9153 / C-125) (Bacillus halodurans).